The following is a 738-amino-acid chain: Catalase-peroxidase (738 aa).

The signal sequence occupies residues 1–24 (MEPLFPKRLLSIAVLCVASATAQA). A cross-link (tryptophyl-tyrosyl-methioninium (Trp-Tyr) (with M-252)) is located at residues 104-226 (WHAAGTYRMI…FGATEMGLIY (123 aa)). Residue histidine 105 is the Proton acceptor of the active site. Residues 191-213 (EEVNWGPEGQWLTDRRHSGDRKL) are disordered. A compositionally biased stretch (basic and acidic residues) spans 203–213 (TDRRHSGDRKL). A cross-link (tryptophyl-tyrosyl-methioninium (Tyr-Met) (with W-104)) is located at residues 226–252 (YVNPEGPHGNPDPIAAAHDIRQAFGRM). Heme b is bound at residue histidine 267.

This sequence belongs to the peroxidase family. Peroxidase/catalase subfamily. In terms of assembly, homodimer or homotetramer. Requires heme b as cofactor. Post-translationally, formation of the three residue Trp-Tyr-Met cross-link is important for the catalase, but not the peroxidase activity of the enzyme.

The enzyme catalyses H2O2 + AH2 = A + 2 H2O. It carries out the reaction 2 H2O2 = O2 + 2 H2O. Functionally, bifunctional enzyme with both catalase and broad-spectrum peroxidase activity. The protein is Catalase-peroxidase of Saccharophagus degradans (strain 2-40 / ATCC 43961 / DSM 17024).